The following is a 195-amino-acid chain: Imidazoleglycerol-phosphate dehydratase (195 aa).

Belongs to the imidazoleglycerol-phosphate dehydratase family.

The protein localises to the cytoplasm. It carries out the reaction D-erythro-1-(imidazol-4-yl)glycerol 3-phosphate = 3-(imidazol-4-yl)-2-oxopropyl phosphate + H2O. It functions in the pathway amino-acid biosynthesis; L-histidine biosynthesis; L-histidine from 5-phospho-alpha-D-ribose 1-diphosphate: step 6/9. This Trichlorobacter lovleyi (strain ATCC BAA-1151 / DSM 17278 / SZ) (Geobacter lovleyi) protein is Imidazoleglycerol-phosphate dehydratase.